The sequence spans 424 residues: Probable methyltransferase EP424R (424 aa).

In terms of domain architecture, Adrift-type SAM-dependent 2'-O-MTase spans 103–315; the sequence is QIVTNAWLKM…TYIVGKNRLR (213 aa). Residues glycine 135 and aspartate 228 each contribute to the S-adenosyl-L-methionine site. The active-site Proton acceptor is the lysine 268.

The protein localises to the virion. The chain is Probable methyltransferase EP424R from Ornithodoros (relapsing fever ticks).